The sequence spans 260 residues: Cytosolic Fe-S cluster assembly factor Nubp2 homolog 2 (260 aa).

14 to 21 is an ATP binding site; it reads GKGGVGKS. Positions 188 and 191 each coordinate [4Fe-4S] cluster.

This sequence belongs to the Mrp/NBP35 ATP-binding proteins family. NUBP2/CFD1 subfamily. As to quaternary structure, heterotetramer of 2 Nubp1 and 2 Nubp2 chains. It depends on [4Fe-4S] cluster as a cofactor.

Its subcellular location is the cytoplasm. Its function is as follows. Component of the cytosolic iron-sulfur (Fe/S) protein assembly (CIA) machinery. Required for maturation of extramitochondrial Fe-S proteins. The Nubp1-Nubp2 heterotetramer forms a Fe-S scaffold complex, mediating the de novo assembly of an Fe-S cluster and its transfer to target apoproteins. The sequence is that of Cytosolic Fe-S cluster assembly factor Nubp2 homolog 2 from Drosophila yakuba (Fruit fly).